Reading from the N-terminus, the 205-residue chain is uncharacterized protein (205 aa).

Over 1 to 63 (MQRTRELESS…QHPKVAKFLK (63 aa)) the chain is Cytoplasmic. A helical transmembrane segment spans residues 64–84 (VQLVFDLISLFIFATHQLLLL). The Extracellular segment spans residues 85–124 (EDGNFGKHYFKRKTKRCSKFSCSRCNANAHHPKWFKFKHS). Residues 125 to 145 (LLCLGTFCFGVYSLVKINKFF) traverse the membrane as a helical segment. Residues 146 to 205 (KTDQTVDLNRLLELFFWQLNAILNMKLFAFYGDHLESHSAPLDVYEDSFANKSSSGGDEV) are Cytoplasmic-facing.

It localises to the membrane. This is an uncharacterized protein from Saccharomyces cerevisiae (strain ATCC 204508 / S288c) (Baker's yeast).